The following is a 640-amino-acid chain: MPTITLPDGSKKSFNAAITGQEIAESIGSSLAKAAIAVRIGEKLQDLSDTIACDADVTIITDKDEAGLEIIRHSCAHLLGHALKQLWPQAKMVIGPVIENGFYYDIEADHRFTPEDLAVLEERMQKLAATGYSVKKEWTPVARAREIFHERQEDFKIRLIDDFDADVKEVGLYYHQEYVDMCRGPHVPDMGKIKAFKLTKLSGSYWRGDAQAEALQRIYGVAFRSKKELDDYLTQQAEAEKRDHRKIGKALDLFHLQEEAPGMVFWHAKGWTIYREIENYMRTKLRKYGYQEVQGPQILDRSLWEKSGHWDKFGGNMFTCCIDNHDFAVKPMNCPGHVQIFNQGLKSYRELPIRYAEFGICHRNEPSGTLHGIMRVRRFVQDDGHIFCARNQVRVEIERTCRMVYEVYDDFGFKNVELALSTRPEKRVGSDEIWDEAERGLQEALEAQNLAFRLQPGEGAFYGPKIEFTLKDSLGRRWQCGTVQLDFSMPARLGAEYIDEHGEKQTPVMIHRAILGSLERFIGILIEQYAGNMPVWLSPVQAMIMPITDTHADYVQNVMQKFIAAGIRAEIDLRNEKISYKIREHTLQRVPFLLVAGDREKQSNTLSVRTRDGKELGVMEIATIIEHIRHLIETKSQEIE.

Residues Met-1–Thr-61 enclose the TGS domain. A catalytic region spans residues Asp-243–Pro-534. Cys-334, His-385, and His-511 together coordinate Zn(2+).

The protein belongs to the class-II aminoacyl-tRNA synthetase family. Homodimer. Zn(2+) is required as a cofactor.

The protein localises to the cytoplasm. The catalysed reaction is tRNA(Thr) + L-threonine + ATP = L-threonyl-tRNA(Thr) + AMP + diphosphate + H(+). In terms of biological role, catalyzes the attachment of threonine to tRNA(Thr) in a two-step reaction: L-threonine is first activated by ATP to form Thr-AMP and then transferred to the acceptor end of tRNA(Thr). Also edits incorrectly charged L-seryl-tRNA(Thr). The protein is Threonine--tRNA ligase of Dichelobacter nodosus (strain VCS1703A).